The chain runs to 249 residues: 3-deoxy-D-manno-octulosonic acid kinase (249 aa).

Aspartate 175 is a catalytic residue.

It belongs to the protein kinase superfamily. KdkA/RfaP family.

The protein resides in the cell inner membrane. It carries out the reaction an alpha-Kdo-(2-&gt;6)-lipid IVA + ATP = a 4-O-phospho-alpha-Kdo-(2-&gt;6)-lipid IVA + ADP + H(+). The protein operates within bacterial outer membrane biogenesis; LPS core biosynthesis. Catalyzes the ATP-dependent phosphorylation of the 3-deoxy-D-manno-octulosonic acid (Kdo) residue in Kdo-lipid IV(A) at the 4-OH position. In Xylella fastidiosa (strain M12), this protein is 3-deoxy-D-manno-octulosonic acid kinase.